Here is a 359-residue protein sequence, read N- to C-terminus: WAT1-related protein At5g64700 (359 aa).

The next 10 membrane-spanning stretches (helical) occupy residues 10 to 30, 37 to 57, 66 to 86, 100 to 120, 135 to 155, 186 to 206, 218 to 238, 256 to 276, 282 to 302, and 306 to 326; these read LMVTIIQVIYTIMFLISKAVF, FVFVFYRQAFATIFLAPLAFF, LSFVTFIKIFMLSLFGVTLSL, LAAATTASLPAITFFLALLFG, LVGITVCMGGVIILAIYKGPL, WLKGCVLMITSNILWGLWLVL, LYFTTLHCLLSSIQSFVIAIA, AVIYCGFIVTGVAYYLQSWVI, VFLSMFTPLSLLFTLLSSAIL, and IISLGSIVGGLLLIIGLYCVL. 2 consecutive EamA domains span residues 18-136 and 198-326; these read IYTI…AKLV and ILWG…YCVL.

Belongs to the drug/metabolite transporter (DMT) superfamily. Plant drug/metabolite exporter (P-DME) (TC 2.A.7.4) family.

It localises to the membrane. The protein is WAT1-related protein At5g64700 of Arabidopsis thaliana (Mouse-ear cress).